A 69-amino-acid chain; its full sequence is Ubiquitin-ribosomal protein eL40 fusion protein (69 aa).

In terms of domain architecture, Ubiquitin-like spans 1–17; sequence NIQKESTLHLVLRLRGG. Lys-4 is covalently cross-linked (Glycyl lysine isopeptide (Lys-Gly) (interchain with G-Cter in ubiquitin)). Gly-17 participates in a covalent cross-link: Glycyl lysine isopeptide (Gly-Lys) (interchain with K-? in acceptor proteins). The residue at position 39 (Lys-39) is an N6,N6,N6-trimethyllysine.

This sequence in the N-terminal section; belongs to the ubiquitin family. The protein in the C-terminal section; belongs to the eukaryotic ribosomal protein eL40 family. Part of the 60S ribosomal subunit. Trimethylation of Lys-39 ('Lys-22' of the mature chain) by SMYD5 promotes translation elongation and protein synthesis.

The protein resides in the cytoplasm. It is found in the nucleus. Exists either covalently attached to another protein, or free (unanchored). When covalently bound, it is conjugated to target proteins via an isopeptide bond either as a monomer (monoubiquitin), a polymer linked via different Lys residues of the ubiquitin (polyubiquitin chains) or a linear polymer linked via the initiator Met of the ubiquitin (linear polyubiquitin chains). Polyubiquitin chains, when attached to a target protein, have different functions depending on the Lys residue of the ubiquitin that is linked: Lys-6-linked may be involved in DNA repair; Lys-11-linked is involved in ERAD (endoplasmic reticulum-associated degradation) and in cell-cycle regulation; Lys-29-linked is involved in proteotoxic stress response and cell cycle; Lys-33-linked is involved in kinase modification; Lys-48-linked is involved in protein degradation via the proteasome; Lys-63-linked is involved in endocytosis, DNA-damage responses as well as in signaling processes leading to activation of the transcription factor NF-kappa-B. Linear polymer chains formed via attachment by the initiator Met lead to cell signaling. Ubiquitin is usually conjugated to Lys residues of target proteins, however, in rare cases, conjugation to Cys or Ser residues has been observed. When polyubiquitin is free (unanchored-polyubiquitin), it also has distinct roles, such as in activation of protein kinases, and in signaling. Its function is as follows. Component of the 60S subunit of the ribosome. This chain is Ubiquitin-ribosomal protein eL40 fusion protein (UBA52), found in Gallus gallus (Chicken).